We begin with the raw amino-acid sequence, 411 residues long: Probable glutamate dehydrogenase 3 (411 aa).

Residue K102 is part of the active site.

This sequence belongs to the Glu/Leu/Phe/Val dehydrogenases family.

The catalysed reaction is L-glutamate + NAD(+) + H2O = 2-oxoglutarate + NH4(+) + NADH + H(+). It catalyses the reaction L-glutamate + NADP(+) + H2O = 2-oxoglutarate + NH4(+) + NADPH + H(+). This is Probable glutamate dehydrogenase 3 (GSH3) from Arabidopsis thaliana (Mouse-ear cress).